A 1072-amino-acid polypeptide reads, in one-letter code: DNA-directed RNA polymerase subunit beta (1072 aa).

This sequence belongs to the RNA polymerase beta chain family. In terms of assembly, in plastids the minimal PEP RNA polymerase catalytic core is composed of four subunits: alpha, beta, beta', and beta''. When a (nuclear-encoded) sigma factor is associated with the core the holoenzyme is formed, which can initiate transcription.

It is found in the plastid. The protein resides in the chloroplast. The enzyme catalyses RNA(n) + a ribonucleoside 5'-triphosphate = RNA(n+1) + diphosphate. Its function is as follows. DNA-dependent RNA polymerase catalyzes the transcription of DNA into RNA using the four ribonucleoside triphosphates as substrates. In Cycas taitungensis (Prince sago), this protein is DNA-directed RNA polymerase subunit beta.